Here is a 201-residue protein sequence, read N- to C-terminus: NADH-quinone oxidoreductase subunit B 1 (201 aa).

Residues Cys-80, Cys-81, Cys-145, and Cys-175 each coordinate [4Fe-4S] cluster.

The protein belongs to the complex I 20 kDa subunit family. As to quaternary structure, NDH-1 is composed of 14 different subunits. Subunits NuoB, C, D, E, F, and G constitute the peripheral sector of the complex. Requires [4Fe-4S] cluster as cofactor.

The protein resides in the cell inner membrane. The enzyme catalyses a quinone + NADH + 5 H(+)(in) = a quinol + NAD(+) + 4 H(+)(out). NDH-1 shuttles electrons from NADH, via FMN and iron-sulfur (Fe-S) centers, to quinones in the respiratory chain. The immediate electron acceptor for the enzyme in this species is believed to be ubiquinone. Couples the redox reaction to proton translocation (for every two electrons transferred, four hydrogen ions are translocated across the cytoplasmic membrane), and thus conserves the redox energy in a proton gradient. The chain is NADH-quinone oxidoreductase subunit B 1 from Rhodopseudomonas palustris (strain BisB18).